The chain runs to 489 residues: Serine/threonine-protein kinase BSK3 (489 aa).

The N-myristoyl glycine moiety is linked to residue Gly-2. The 267-residue stretch at 58 to 324 (EYIVSEHGEK…ETEVLSHVLM (267 aa)) folds into the Protein kinase domain. ATP-binding positions include 64-72 (HGEKAPNVV) and Lys-86. The active-site Proton acceptor is Asp-180. Ser-212 bears the Phosphoserine mark.

Belongs to the protein kinase superfamily. Ser/Thr protein kinase family. In terms of assembly, interacts with BRI1. Phosphorylated by BRI1 upon brassinolide (BL) treatment. Phosphorylated by ASK7/BIN2 and ASK9/BIL2.

The protein resides in the cell membrane. It catalyses the reaction L-seryl-[protein] + ATP = O-phospho-L-seryl-[protein] + ADP + H(+). The catalysed reaction is L-threonyl-[protein] + ATP = O-phospho-L-threonyl-[protein] + ADP + H(+). In terms of biological role, probable serine/threonine kinase that acts as a positive regulator of brassinosteroid (BR) signaling downstream of the receptor kinase BRI1. Mediates signal transduction from BRI1 by functioning as substrate of BRI1. Functions redundantly with BSK4, BSK6, BSK7 and BSK8. The chain is Serine/threonine-protein kinase BSK3 from Arabidopsis thaliana (Mouse-ear cress).